We begin with the raw amino-acid sequence, 246 residues long: RNA polymerase sigma-B factor (246 aa).

Positions Asp25–Val38 match the Polymerase core binding motif. The segment at residues Leu201–Ile220 is a DNA-binding region (H-T-H motif).

The protein belongs to the sigma-70 factor family.

In terms of biological role, sigma factors are initiation factors that promote the attachment of RNA polymerase to specific initiation sites and are then released. This sigma factor is essential for late-stage differentiation of M.xanthus. This Myxococcus xanthus protein is RNA polymerase sigma-B factor (sigB).